Consider the following 1693-residue polypeptide: Putative stoned B-like protein (1693 aa).

Over residues 1-12 (MSWRDRDFDPHG) the composition is skewed to basic and acidic residues. Disordered regions lie at residues 1 to 54 (MSWR…ELPA), 222 to 322 (NQIP…VEKS), 334 to 371 (TVEITSPDAPHQGAFHDNTPKEPKVVEEEEDDDLPTFS), 383 to 438 (KEMT…DPNA), 585 to 807 (GDYH…TSAA), 841 to 869 (KKMEKLQKKKLKQQGKKAATPTLEPDEED), and 899 to 1024 (PVKE…FVAD). Residues 26 to 39 (SSSERAASMRAMRS) show a composition bias toward low complexity. 2 stretches are compositionally biased toward basic and acidic residues: residues 279–301 (MEDKMEQAEEKARKEEKKEKEET) and 311–322 (TTEKHQNEVEKS). A compositionally biased stretch (acidic residues) spans 360 to 371 (EEEEDDDLPTFS). The span at 393–412 (ENVENEKQEDTHISEGHVEY) shows a compositional bias: basic and acidic residues. Polar residues predominate over residues 596–615 (DENSTSAISGYEQNGASTSL). The span at 632-643 (YYQGQEYQQEYY) shows a compositional bias: low complexity. The DPF 1 motif lies at 684-686 (DPF). Residues 708-722 (SPTPEASSSTGTSAP) are compositionally biased toward low complexity. Over residues 745–760 (PPRPPPAARPPPPRPA) the composition is skewed to pro residues. Residues 786–807 (KVSTAVKSTESTLKNLEETSAA) are compositionally biased toward polar residues. Over residues 899-913 (PVKEIKKAPEIRRVD) the composition is skewed to basic and acidic residues. Short sequence motifs (DPF) lie at residues 1006–1008 (DPF), 1024–1026 (DPF), and 1039–1041 (DPF). The tract at residues 1062–1095 (ANAENEDDFYNGRQSPTLSTPTPEGGSPISQQRP) is disordered. Residues 1073-1095 (GRQSPTLSTPTPEGGSPISQQRP) show a composition bias toward polar residues. The region spanning 1136–1283 (GWDLMVRHPI…KCKITRTAKP (148 aa)) is the SHD domain. The MHD domain occupies 1287–1606 (QDEVQIHCYD…AKYQYKVEID (320 aa)). The tract at residues 1633 to 1693 (ELHQPTFNPS…IQIDMKNYGY (61 aa)) is disordered. The span at 1637–1651 (PTFNPSTQESDTQQG) shows a compositional bias: polar residues.

Belongs to the Stoned B family.

Its subcellular location is the cytoplasm. In terms of biological role, potential adapter protein, which may be involved in endocytic vesicle recycling of synaptic vesicles. The protein is Putative stoned B-like protein (unc-41) of Caenorhabditis elegans.